The primary structure comprises 114 residues: Hydrogenase maturation factor HypA (114 aa).

Histidine 2 is a Ni(2+) binding site. Cysteine 70, cysteine 73, cysteine 86, and cysteine 89 together coordinate Zn(2+).

It belongs to the HypA/HybF family.

In terms of biological role, involved in the maturation of [NiFe] hydrogenases. Required for nickel insertion into the metal center of the hydrogenase. In Trichodesmium erythraeum (strain IMS101), this protein is Hydrogenase maturation factor HypA.